Here is a 273-residue protein sequence, read N- to C-terminus: Dermonecrotic toxin LdSicTox-alphaIB1av (273 aa).

His5 is a catalytic residue. Mg(2+) is bound by residues Glu25 and Asp27. Catalysis depends on His41, which acts as the Nucleophile. Cystine bridges form between Cys45-Cys51 and Cys47-Cys190. Asp85 is a binding site for Mg(2+). N-linked (GlcNAc...) asparagine glycosylation is present at Asn250.

The protein belongs to the arthropod phospholipase D family. Class II subfamily. The cofactor is Mg(2+). Expressed by the venom gland.

The protein resides in the secreted. The enzyme catalyses an N-(acyl)-sphingosylphosphocholine = an N-(acyl)-sphingosyl-1,3-cyclic phosphate + choline. It carries out the reaction an N-(acyl)-sphingosylphosphoethanolamine = an N-(acyl)-sphingosyl-1,3-cyclic phosphate + ethanolamine. It catalyses the reaction a 1-acyl-sn-glycero-3-phosphocholine = a 1-acyl-sn-glycero-2,3-cyclic phosphate + choline. The catalysed reaction is a 1-acyl-sn-glycero-3-phosphoethanolamine = a 1-acyl-sn-glycero-2,3-cyclic phosphate + ethanolamine. Dermonecrotic toxins cleave the phosphodiester linkage between the phosphate and headgroup of certain phospholipids (sphingolipid and lysolipid substrates), forming an alcohol (often choline) and a cyclic phosphate. This toxin acts on sphingomyelin (SM). It may also act on ceramide phosphoethanolamine (CPE), lysophosphatidylcholine (LPC) and lysophosphatidylethanolamine (LPE), but not on lysophosphatidylserine (LPS), and lysophosphatidylglycerol (LPG). It acts by transphosphatidylation, releasing exclusively cyclic phosphate products as second products. Induces dermonecrosis, hemolysis, increased vascular permeability, edema, inflammatory response, and platelet aggregation. The sequence is that of Dermonecrotic toxin LdSicTox-alphaIB1av from Loxosceles deserta (Desert recluse spider).